Here is a 529-residue protein sequence, read N- to C-terminus: Beta-galactoside alpha-2,6-sialyltransferase 2 (529 aa).

The Cytoplasmic portion of the chain corresponds to 1-11 (MKPHLKQWRQR). Residues 12 to 32 (MLFGLFAGGLLFLLIFIYFTD) traverse the membrane as a helical; Signal-anchor for type II membrane protein segment. Residues 33 to 529 (SNPAEPVPSS…PAPSPVIPHS (497 aa)) lie on the Lumenal side of the membrane. Positions 142-186 (SHSQGTLGFPSPGEPGPREGAFPAAQVQRRRVKKRHRRQRRSHVL) are disordered. Residues 169–183 (QRRRVKKRHRRQRRS) are compositionally biased toward basic residues. Asn-211 carries an N-linked (GlcNAc...) asparagine glycan. 3 disulfides stabilise this stretch: Cys-253-Cys-519, Cys-296-Cys-448, and Cys-466-Cys-477.

It belongs to the glycosyltransferase 29 family.

It localises to the golgi apparatus. It is found in the golgi stack membrane. The enzyme catalyses a beta-D-galactoside + CMP-N-acetyl-beta-neuraminate = an N-acetyl-alpha-neuraminyl-(2-&gt;6)-beta-D-galactosyl derivative + CMP + H(+). Transfers sialic acid from the donor of substrate CMP-sialic acid to galactose containing acceptor substrates. Has alpha-2,6-sialyltransferase activity toward oligosaccharides that have the Gal-beta-1,4-GlcNAc sequence at the non-reducing end of their carbohydrate groups, but it has weak or no activities toward glycoproteins and glycolipids. This chain is Beta-galactoside alpha-2,6-sialyltransferase 2 (ST6GAL2), found in Pan troglodytes (Chimpanzee).